We begin with the raw amino-acid sequence, 166 residues long: Urease accessory protein UreE (166 aa).

The protein belongs to the UreE family.

It is found in the cytoplasm. Functionally, involved in urease metallocenter assembly. Binds nickel. Probably functions as a nickel donor during metallocenter assembly. The polypeptide is Urease accessory protein UreE (Azotobacter vinelandii (strain DJ / ATCC BAA-1303)).